The following is a 406-amino-acid chain: 8-amino-7-oxononanoate synthase (406 aa).

R20 is a binding site for substrate. 116–117 contacts pyridoxal 5'-phosphate; it reads GY. Position 141 (H141) interacts with substrate. Pyridoxal 5'-phosphate-binding residues include S187, H215, and T243. Position 246 is an N6-(pyridoxal phosphate)lysine (K246). T366 provides a ligand contact to substrate.

This sequence belongs to the class-II pyridoxal-phosphate-dependent aminotransferase family. BioF subfamily. As to quaternary structure, homodimer. The cofactor is pyridoxal 5'-phosphate.

The catalysed reaction is 6-carboxyhexanoyl-[ACP] + L-alanine + H(+) = (8S)-8-amino-7-oxononanoate + holo-[ACP] + CO2. It participates in cofactor biosynthesis; biotin biosynthesis. In terms of biological role, catalyzes the decarboxylative condensation of pimeloyl-[acyl-carrier protein] and L-alanine to produce 8-amino-7-oxononanoate (AON), [acyl-carrier protein], and carbon dioxide. The sequence is that of 8-amino-7-oxononanoate synthase from Cupriavidus metallidurans (strain ATCC 43123 / DSM 2839 / NBRC 102507 / CH34) (Ralstonia metallidurans).